We begin with the raw amino-acid sequence, 590 residues long: Aspartate--tRNA ligase (590 aa).

An L-aspartate-binding site is contributed by E174. Positions 198 to 201 (QLMK) are aspartate. Position 220 (R220) interacts with L-aspartate. ATP contacts are provided by residues 220–222 (RDE) and Q229. H443 contacts L-aspartate. E484 is an ATP binding site. R491 contributes to the L-aspartate binding site. 536–539 (GLDR) provides a ligand contact to ATP.

This sequence belongs to the class-II aminoacyl-tRNA synthetase family. Type 1 subfamily. In terms of assembly, homodimer.

It localises to the cytoplasm. It carries out the reaction tRNA(Asp) + L-aspartate + ATP = L-aspartyl-tRNA(Asp) + AMP + diphosphate. Catalyzes the attachment of L-aspartate to tRNA(Asp) in a two-step reaction: L-aspartate is first activated by ATP to form Asp-AMP and then transferred to the acceptor end of tRNA(Asp). The polypeptide is Aspartate--tRNA ligase (Lactococcus lactis subsp. cremoris (strain MG1363)).